A 93-amino-acid chain; its full sequence is Putative ribosomal protein eL43-like (93 aa).

The C4-type zinc-finger motif lies at 40–61 (CSFCGKTKMKRRAVKIRHCNSC).

It belongs to the eukaryotic ribosomal protein eL43 family.

The sequence is that of Putative ribosomal protein eL43-like (RPL37AP8) from Homo sapiens (Human).